Reading from the N-terminus, the 73-residue chain is Large ribosomal subunit protein uL29 (73 aa).

The segment at 1-20 (MYKAKDLRDQSLEELEATHD) is disordered.

It belongs to the universal ribosomal protein uL29 family.

In Protochlamydia amoebophila (strain UWE25), this protein is Large ribosomal subunit protein uL29.